The sequence spans 150 residues: Actin-related protein 2/3 complex subunit 5-C (150 aa).

The segment at 21–45 (NKFVDEEEAGEGQQGPDEGEVDSAI) is disordered.

It belongs to the ARPC5 family. In terms of assembly, component of the Arp2/3 complex composed of actr2/arp2, actr3/arp3, arpc1 (arpc1a or arpc1b), arpc2, arpc3, arpc4 and arpc5.

It localises to the cytoplasm. The protein resides in the cytoskeleton. It is found in the cell projection. The protein localises to the nucleus. Functionally, component of the Arp2/3 complex, a multiprotein complex that mediates actin polymerization upon stimulation by nucleation-promoting factor (NPF). The Arp2/3 complex mediates the formation of branched actin networks in the cytoplasm, providing the force for cell motility. In addition to its role in the cytoplasmic cytoskeleton, the Arp2/3 complex also promotes actin polymerization in the nucleus, thereby regulating gene transcription and repair of damaged DNA. The Arp2/3 complex promotes homologous recombination (HR) repair in response to DNA damage by promoting nuclear actin polymerization, leading to drive motility of double-strand breaks (DSBs). The protein is Actin-related protein 2/3 complex subunit 5-C (arpc5-c) of Xenopus laevis (African clawed frog).